The chain runs to 355 residues: cAMP-dependent protein kinase catalytic subunit PRKX (355 aa).

The residue at position 1 (methionine 1) is an N-acetylmethionine. The disordered stretch occupies residues 1 to 42; the sequence is MEPPAGAAATVKDPDHDPVKTKVSAPAADPKPRTSSQKAGHS. In terms of domain architecture, Protein kinase spans 46–300; that stretch reads WDTIATVGTG…AEDIKRHRWF (255 aa). ATP-binding positions include 52–60 and lysine 75; that span reads VGTGTFGRV. The active-site Proton acceptor is aspartate 169. Residue threonine 200 is modified to Phosphothreonine. Residues 301-355 enclose the AGC-kinase C-terminal domain; that stretch reads RGVEWESVPQRKLKPPIVPKLSGDGDISNFETYPESELDKTPSVSDKDLETFKNF. The tract at residues 316 to 355 is disordered; the sequence is PIVPKLSGDGDISNFETYPESELDKTPSVSDKDLETFKNF. The segment covering 337-355 has biased composition (basic and acidic residues); that stretch reads ELDKTPSVSDKDLETFKNF.

This sequence belongs to the protein kinase superfamily. AGC Ser/Thr protein kinase family. cAMP subfamily. Like other cAMP-dependent protein kinases, the inactive holoenzyme is probably composed of 2 PRKX catalytic subunits and a dimer of regulatory subunits. Interacts (cAMP-dependent) specifically with the regulatory subunits PRKAR1A and PRKAR1B. Compared to other cAMP-dependent serine/threonine protein kinases, does not interact with the 2 other PKA regulatory subunits PRKAR2A and PRKAR2B. Interacts with PIN1 (via WW domain). Interacts with cAMP-dependent protein kinase inhibitor/PKI proteins; inhibits PRKX. Interacts with GPKOW. Interacts with SMAD6. Interacts with PKD1; involved in differentiation and controlled morphogenesis of the kidney. Post-translationally, phosphorylated; autophosphorylates in vitro. Widely expressed.

The protein localises to the cytoplasm. It is found in the nucleus. The enzyme catalyses L-seryl-[protein] + ATP = O-phospho-L-seryl-[protein] + ADP + H(+). The catalysed reaction is L-threonyl-[protein] + ATP = O-phospho-L-threonyl-[protein] + ADP + H(+). Its activity is regulated as follows. Binding of cAMP to the PRKAR1A or PRKAR1B regulatory subunits induces dissociation of the holoenzyme heterotetramer. The released monomeric PRKX is then active and able to phosphorylate its substrates. Serine/threonine protein kinase regulated by and mediating cAMP signaling in cells. Acts through phosphorylation of downstream targets that may include CREB, SMAD6 and PKD1 and has multiple functions in cellular differentiation and epithelial morphogenesis. Regulates myeloid cell differentiation through SMAD6 phosphorylation. Involved in nephrogenesis by stimulating renal epithelial cell migration and tubulogenesis. Also involved in angiogenesis through stimulation of endothelial cell proliferation, migration and vascular-like structure formation. The protein is cAMP-dependent protein kinase catalytic subunit PRKX (Prkx) of Mus musculus (Mouse).